The sequence spans 223 residues: Ribose-5-phosphate isomerase A (223 aa).

Substrate is bound by residues 32–35 (TGST), 85–88 (DGAD), and 98–101 (KGGG). Catalysis depends on E107, which acts as the Proton acceptor. K125 contacts substrate.

The protein belongs to the ribose 5-phosphate isomerase family. As to quaternary structure, homodimer.

It carries out the reaction aldehydo-D-ribose 5-phosphate = D-ribulose 5-phosphate. The protein operates within carbohydrate degradation; pentose phosphate pathway; D-ribose 5-phosphate from D-ribulose 5-phosphate (non-oxidative stage): step 1/1. In terms of biological role, catalyzes the reversible conversion of ribose-5-phosphate to ribulose 5-phosphate. The chain is Ribose-5-phosphate isomerase A from Pseudomonas paraeruginosa (strain DSM 24068 / PA7) (Pseudomonas aeruginosa (strain PA7)).